The chain runs to 168 residues: Sec-independent protein translocase protein TatB (168 aa).

Residues 1-21 (MIDLGISKLALIGAVALIVIG) form a helical membrane-spanning segment.

This sequence belongs to the TatB family. The Tat system comprises two distinct complexes: a TatABC complex, containing multiple copies of TatA, TatB and TatC subunits, and a separate TatA complex, containing only TatA subunits. Substrates initially bind to the TatABC complex, which probably triggers association of the separate TatA complex to form the active translocon.

The protein localises to the cell inner membrane. Functionally, part of the twin-arginine translocation (Tat) system that transports large folded proteins containing a characteristic twin-arginine motif in their signal peptide across membranes. Together with TatC, TatB is part of a receptor directly interacting with Tat signal peptides. TatB may form an oligomeric binding site that transiently accommodates folded Tat precursor proteins before their translocation. This Cupriavidus pinatubonensis (strain JMP 134 / LMG 1197) (Cupriavidus necator (strain JMP 134)) protein is Sec-independent protein translocase protein TatB.